Here is a 400-residue protein sequence, read N- to C-terminus: Argininosuccinate synthase (400 aa).

8–16 (AYSGGLDTS) provides a ligand contact to ATP. Tyr87 contacts L-citrulline. Gly117 lines the ATP pocket. L-aspartate contacts are provided by Thr119, Asn123, and Asp124. Position 123 (Asn123) interacts with L-citrulline. L-citrulline contacts are provided by Arg127, Ser175, Glu260, and Tyr272.

The protein belongs to the argininosuccinate synthase family. Type 1 subfamily. Homotetramer.

Its subcellular location is the cytoplasm. It carries out the reaction L-citrulline + L-aspartate + ATP = 2-(N(omega)-L-arginino)succinate + AMP + diphosphate + H(+). It participates in amino-acid biosynthesis; L-arginine biosynthesis; L-arginine from L-ornithine and carbamoyl phosphate: step 2/3. The chain is Argininosuccinate synthase from Mycolicibacterium vanbaalenii (strain DSM 7251 / JCM 13017 / BCRC 16820 / KCTC 9966 / NRRL B-24157 / PYR-1) (Mycobacterium vanbaalenii).